The sequence spans 503 residues: Alpha-1-syntrophin (503 aa).

2 consecutive PH domains span residues 6 to 263 (RAPR…AQIG) and 287 to 399 (DIKQ…DGCH). The tract at residues 40-68 (LTVSPADGEPGPEPEPAQLNGAAEPGAAP) is disordered. One can recognise a PDZ domain in the interval 81-164 (RVTVRKADAG…EVVLEVKYMK (84 aa)). 5 positions are modified to phosphoserine: Ser-95, Ser-178, Ser-183, Ser-187, and Ser-194. Residues 177–203 (TSVGWDSPPASPLQRQPSSPGPQPRNL) are disordered. One can recognise an SU domain in the interval 447-503 (PFEKLQMSSDDGTSLLFLDFGGAEGEIQLDLHSCPKTMVFIIHSFLSAKVTRLGLLA). A calmodulin-binding region spans residues 481–503 (PKTMVFIIHSFLSAKVTRLGLLA).

This sequence belongs to the syntrophin family. Monomer and homodimer. Interacts with MAPK12, TGFA, GA and F-actin. Interacts with the other members of the syntrophin family: SNTB1 and SNTB2; with dystrophin protein DMD and related proteins DTNA and UTRN; SGCG and SGCA of the dystrophin glycoprotein complex; NOS1; GRB2; calmodulin and the sodium channel proteins SCN4A and SCN5A. Interacts with MYOC; regulates muscle hypertrophy. Interacts with DTNB. Post-translationally, phosphorylated by CaM-kinase II. Phosphorylation may inhibit the interaction with DMD. As to expression, high expression in skeletal muscle. Expressed at intermediate level in heart, kidney and brain, and at low level in intestine, liver, lung and testis.

The protein localises to the cell membrane. The protein resides in the sarcolemma. It localises to the cell junction. It is found in the cytoplasm. Its subcellular location is the cytoskeleton. Functionally, adapter protein that binds to and probably organizes the subcellular localization of a variety of membrane proteins. May link various receptors to the actin cytoskeleton and the extracellular matrix via the dystrophin glycoprotein complex. Plays an important role in synapse formation and in the organization of UTRN and acetylcholine receptors at the neuromuscular synapse. Binds to phosphatidylinositol 4,5-bisphosphate. This is Alpha-1-syntrophin (Snta1) from Mus musculus (Mouse).